A 156-amino-acid chain; its full sequence is Ribosomal RNA large subunit methyltransferase H (156 aa).

Residues Leu-72, Gly-104, and 123–128 contribute to the S-adenosyl-L-methionine site; that span reads FGKMVW.

The protein belongs to the RNA methyltransferase RlmH family. Homodimer.

Its subcellular location is the cytoplasm. It carries out the reaction pseudouridine(1915) in 23S rRNA + S-adenosyl-L-methionine = N(3)-methylpseudouridine(1915) in 23S rRNA + S-adenosyl-L-homocysteine + H(+). In terms of biological role, specifically methylates the pseudouridine at position 1915 (m3Psi1915) in 23S rRNA. The polypeptide is Ribosomal RNA large subunit methyltransferase H (Ruegeria sp. (strain TM1040) (Silicibacter sp.)).